The following is an 897-amino-acid chain: Protein transport protein SEC24-1 (897 aa).

The Zn(2+) site is built by Cys-213, Cys-216, Cys-235, and Cys-238. Residues Cys-213–Cys-238 form a zinc finger-like region.

Belongs to the SEC23/SEC24 family. SEC24 subfamily. The COPII coat is composed of at least 5 proteins: the SEC23/24 complex, the SEC13/31 complex, and the protein SAR1. Golgi apparatus membrane; Peripheral membrane protein; Cytoplasmic side.

Its subcellular location is the cytoplasm. The protein localises to the cytoplasmic vesicle. The protein resides in the COPII-coated vesicle membrane. It is found in the endoplasmic reticulum membrane. It localises to the golgi apparatus membrane. Its function is as follows. Component of the coat protein complex II (COPII) which promotes the formation of transport vesicles from the endoplasmic reticulum (ER). The coat has two main functions, the physical deformation of the endoplasmic reticulum membrane into vesicles and the selection of cargo molecules. The polypeptide is Protein transport protein SEC24-1 (SEC241) (Candida glabrata (strain ATCC 2001 / BCRC 20586 / JCM 3761 / NBRC 0622 / NRRL Y-65 / CBS 138) (Yeast)).